We begin with the raw amino-acid sequence, 759 residues long: MEIYTMKTNFLVLALSLCILLSSFHEVSCQDDGSGLSNLDLIERDYQDSVNALQGKDDEDQSAKIQSENQNNTTVTDKNTISLSLSDESEVGSVSDESVGRSSLLDQIKLEFEAHHNSINQAGSDGVKAESKDDDEELSAHRQKMLEEIEHEFEAASDSLKQLKTDDVNEGNDEEHSAKRQSLLEEIEREFEAATKELEQLKVNDFTGDKDDEEHSAKRKSMLEAIEREFEAAMEGIEALKVSDSTGSGDDEEQSAKRLSMLEEIEREFEAASKGLEQLRASDSTADNNEEEHAAKGQSLLEEIEREFEAATESLKQLQVDDSTEDKEHFTAAKRQSLLEEIEREFEAATKDLKQLNDFTEGSADDEQSAKRNKMLEDIEREFEAATIGLEQLKANDFSEGNNNEEQSAKRKSMLEEIEREFEAAIGGLKQIKVDDSRNLEEESAKRKIILEEMEREFEEAHSGINAKADKEESAKKQSGSAIPEVLGLGQSGGCSCSKQDEDSSIVIPTKYSIEDILSEESAVQGTETSSLTASLTQLVENHRKEKESLLGHRVLTSPSIASSTSESSATSETVETLRAKLNELRGLTARELVTRKDFGQILITAASFEELSSAPISYISRLAKYRNVIKEGLEASERVHIAQVRAKMLKEVATEKQTAVDTHFATAKKLAQEGDALFVKIFAIKKLLAKLEAEKESVDGKFKETVKELSHLLADASEAYEEYHGAVRKAKDEQAAEEFAKEATQSAEIIWVKFLSSL.

The N-terminal stretch at 1-29 (MEIYTMKTNFLVLALSLCILLSSFHEVSC) is a signal peptide. The disordered stretch occupies residues 55–74 (GKDDEDQSAKIQSENQNNTT). Polar residues predominate over residues 63-74 (AKIQSENQNNTT). EFE repeat repeat units follow at residues 91-138 (VGSV…DEEL), 139-176 (SAHRQKMLEEIEHEFEAASDSLKQLKTDDVNEGNDEEH), 177-215 (SAKRQSLLEEIEREFEAATKELEQLKVNDFTGDKDDEEH), 216-254 (SAKRKSMLEAIEREFEAAMEGIEALKVSDSTGSGDDEEQ), 255-293 (SAKRLSMLEEIEREFEAASKGLEQLRASDSTADNNEEEH), 294-329 (AAKGQSLLEEIEREFEAATESLKQLQVDDSTEDKEH), 330-368 (FTAAKRQSLLEEIEREFEAATKDLKQLNDFTEGSADDEQ), 369-407 (SAKRNKMLEDIEREFEAATIGLEQLKANDFSEGNNNEEQ), 408-443 (SAKRKSMLEEIEREFEAAIGGLKQIKVDDSRNLEEE), and 444-473 (SAKRKIILEEMEREFEEAHSGINAKADKEE). Residues 91–473 (VGSVSDESVG…GINAKADKEE (383 aa)) form a 10 X approximate EFE repeat region. Coiled coils occupy residues 142-461 (RQKM…FEEA) and 685-734 (IKKL…AKDE). 4 disordered regions span residues 154-184 (EAASDSLKQLKTDDVNEGNDEEHSAKRQSLL), 200-219 (QLKVNDFTGDKDDEEHSAKR), 271-332 (AASK…HFTA), and 393-414 (LKANDFSEGNNNEEQSAKRKSM).

As to quaternary structure, homomultimer. Interacts (via C-terminal domain) with GIP1, CSN1 (via N-terminal domain) and TSK (via TPR repeats). Post-translationally, binds calcium through the EFE repeats. Expressed preferentially in flowers and shoot apex.

The protein resides in the endoplasmic reticulum lumen. It localises to the nucleus envelope. Its subcellular location is the cytoplasm. Functionally, involved in seedling development in the dark. May be involved, when interacting with TSK, in the organization of spindle microtubules and may participate, when interacting with GIP1, in structural links between the nuclear envelope and the cytoskeleton. This is TSK-associating protein 1 (TSA1) from Arabidopsis thaliana (Mouse-ear cress).